The chain runs to 101 residues: Integration host factor subunit beta (101 aa).

A disordered region spans residues 57-77 (PARAGRNPRTGAHVPVDQKSV).

The protein belongs to the bacterial histone-like protein family. As to quaternary structure, heterodimer of an alpha and a beta chain.

Its function is as follows. This protein is one of the two subunits of integration host factor, a specific DNA-binding protein that functions in genetic recombination as well as in transcriptional and translational control. This chain is Integration host factor subunit beta, found in Rhodopseudomonas palustris (strain HaA2).